Consider the following 1188-residue polypeptide: DNA-directed RNA polymerase subunit beta (1188 aa).

This sequence belongs to the RNA polymerase beta chain family. In terms of assembly, the RNAP catalytic core consists of 2 alpha, 1 beta, 1 beta' and 1 omega subunit. When a sigma factor is associated with the core the holoenzyme is formed, which can initiate transcription.

It carries out the reaction RNA(n) + a ribonucleoside 5'-triphosphate = RNA(n+1) + diphosphate. Functionally, DNA-dependent RNA polymerase catalyzes the transcription of DNA into RNA using the four ribonucleoside triphosphates as substrates. The chain is DNA-directed RNA polymerase subunit beta from Streptococcus pyogenes serotype M18 (strain MGAS8232).